The following is a 1054-amino-acid chain: Leucine-rich repeats and immunoglobulin-like domains protein 2 (1054 aa).

The signal sequence occupies residues 1–39 (MAAAPRGIWEQRRLGCGLGPLARLLILAQALRLLPAARA). The region spanning 40–74 (GLCPAPCACRLPLLDCSRRKLPAPSWRALSGPLPS) is the LRRNT domain. LRR repeat units follow at residues 75–96 (DISS…LESQ), 97–118 (TLQE…GEPT), 120–141 (NITL…AFEL), 144–165 (ALES…SFPR), 167–188 (SLKY…CFDN), 192–213 (SLLV…VFKL), 215–236 (HLQF…TFQG), 239–260 (SLRS…AFFG), 263–284 (NMEE…WLYG), 287–308 (MLQQ…AWEF), 311–332 (RLSE…AFVG), 335–356 (LLER…VFRF), 359–381 (NLQT…SEAF), 386–407 (SLTK…AFIG), and 410–431 (SLEY…AFSQ). Asn-90 carries an N-linked (GlcNAc...) asparagine glycan. Asn-120 carries N-linked (GlcNAc...) asparagine glycosylation. N-linked (GlcNAc...) asparagine glycosylation is found at Asn-172 and Asn-188. Asn-273 carries N-linked (GlcNAc...) asparagine glycosylation. 5 N-linked (GlcNAc...) asparagine glycosylation sites follow: Asn-440, Asn-467, Asn-513, Asn-570, and Asn-588. The LRRCT domain occupies 442 to 493 (SSLLCDCHLKWLLQWLVDNNFHHSVNVSCAHPEWLAGQSILNVDLKDFVCDD). Ig-like C2-type domains are found at residues 497–596 (PQIR…AKLT), 601–690 (PSFL…ASLT), and 695–784 (PSFI…NVIS). Cysteines 518 and 579 form a disulfide. A disulfide bridge links Cys-622 with Cys-674. Residues Asn-686 and Asn-727 are each glycosylated (N-linked (GlcNAc...) asparagine). Residues Cys-716 and Cys-765 are joined by a disulfide bond. A helical membrane pass occupies residues 807–827 (IVIIVVVCCVVGTSLIWVIVI). The residue at position 905 (Tyr-905) is a Phosphotyrosine. Residue Asn-1024 is glycosylated (N-linked (GlcNAc...) asparagine).

It localises to the cell membrane. The protein localises to the cytoplasm. This chain is Leucine-rich repeats and immunoglobulin-like domains protein 2 (Lrig2), found in Mus musculus (Mouse).